Reading from the N-terminus, the 207-residue chain is dTTP/UTP pyrophosphatase (207 aa).

Residue D79 is the Proton acceptor of the active site.

The protein belongs to the Maf family. YhdE subfamily. A divalent metal cation is required as a cofactor.

The protein resides in the cytoplasm. It carries out the reaction dTTP + H2O = dTMP + diphosphate + H(+). The enzyme catalyses UTP + H2O = UMP + diphosphate + H(+). Functionally, nucleoside triphosphate pyrophosphatase that hydrolyzes dTTP and UTP. May have a dual role in cell division arrest and in preventing the incorporation of modified nucleotides into cellular nucleic acids. This is dTTP/UTP pyrophosphatase from Rhodopseudomonas palustris (strain HaA2).